Here is an 841-residue protein sequence, read N- to C-terminus: MNPGQKQEHDQYPLHDTQFVPQQMDRNSPFADPYPEDQPPPSGYDHQPLLRDNAPSYPPDPFGQPGGYPPQSTMYPPQPMGPPSPNMRYGEAPRRQPRRYKTTRRVKLTHGNLILDCPVPTPYLQAVPIKDTKEFTHMRYTAATCDPADFASQGYTLRQPILQRNTELFIVLTMYNEDEILFARTMHGVMKNIAHLCSRVRSNVWEGPKAWEKVVVCIVSDGRKKIHPRTLSLLATLGVYQDGVAKNVVGDKPVTAHIYEYTTQLSVDPEMKFKGADKGMPPCQILFCLKENNQKKINSHRWFFQAFGPVINPNVCVLIDVGTRPGKTSIYHLWKAFDISSNIAGACGEIRAMSGTAGVALLNPLVAAQNFEYKMSNILDKPLESVFGYISVLPGAFSAYRFTALQNDENGHGPLEKYFLGESQHGADADIFTANMYLAEDRILCYELVAKKKANWVLHYVSSSYGETDVPDSVPEFISQRRRWLNGSFFAGCYALFHWRKVWASDHSFVRKLMFMFEDLYNTYNLIFSWFALGNFYLTFYILTSALGAESLDPKPFSANVASILHTILNYIYILLIIVQFILALGNRPQGSKWAYFGSMTFFAILMVYMMFATIWITVVGVQDAVANADGSFTAMLGESTFRNIIISIVSTYAMYFIASFLFFDPWHMFTSFIQYIFLSPSYTNILNIYAFCNTHDVSWGTKGDNTVSTDLGVVKSKKDGSGDTTVEVEVPTEQKDINEAYEEACVELTRQVEPEVSHRDAKTKQEDYYRSFRTRLVISWIISNLILVVLITNENILASFGTFEVRSTSYLGFVLWSVAGLSAIRFCGSGLYLIFRIFMG.

A compositionally biased stretch (basic and acidic residues) spans 1-13; it reads MNPGQKQEHDQYP. The segment at 1 to 98 is disordered; that stretch reads MNPGQKQEHD…YGEAPRRQPR (98 aa). The segment covering 76–85 has biased composition (pro residues); that stretch reads PPQPMGPPSP. The next 9 membrane-spanning stretches (helical) occupy residues 302–322, 385–405, 526–546, 564–584, 602–622, 644–664, 673–693, 778–798, and 816–836; these read WFFQ…IDVG, SVFG…FTAL, LIFS…LTSA, ILHT…FILA, FFAI…VVGV, NIII…FLFF, FIQY…YAFC, VISW…ENIL, and LWSV…YLIF.

Belongs to the chitin synthase family.

Its subcellular location is the cell membrane. It catalyses the reaction [(1-&gt;4)-N-acetyl-beta-D-glucosaminyl](n) + UDP-N-acetyl-alpha-D-glucosamine = [(1-&gt;4)-N-acetyl-beta-D-glucosaminyl](n+1) + UDP + H(+). Its function is as follows. Polymerizes chitin, a structural polymer of the cell wall and septum, by transferring the sugar moiety of UDP-GlcNAc to the non-reducing end of the growing chitin polymer. This Phycomyces blakesleeanus (strain ATCC 8743b / DSM 1359 / FGSC 10004 / NBRC 33097 / NRRL 1555) protein is Chitin synthase 1 (chs1).